The primary structure comprises 417 residues: Serine--tRNA ligase (417 aa).

232–234 serves as a coordination point for L-serine; it reads TAE. ATP contacts are provided by residues 263 to 265 and valine 279; that span reads RRE. Glutamate 286 provides a ligand contact to L-serine. 350-353 is a binding site for ATP; that stretch reads EISS. Serine 385 serves as a coordination point for L-serine.

It belongs to the class-II aminoacyl-tRNA synthetase family. Type-1 seryl-tRNA synthetase subfamily. As to quaternary structure, homodimer. The tRNA molecule binds across the dimer.

Its subcellular location is the cytoplasm. It carries out the reaction tRNA(Ser) + L-serine + ATP = L-seryl-tRNA(Ser) + AMP + diphosphate + H(+). It catalyses the reaction tRNA(Sec) + L-serine + ATP = L-seryl-tRNA(Sec) + AMP + diphosphate + H(+). It functions in the pathway aminoacyl-tRNA biosynthesis; selenocysteinyl-tRNA(Sec) biosynthesis; L-seryl-tRNA(Sec) from L-serine and tRNA(Sec): step 1/1. In terms of biological role, catalyzes the attachment of serine to tRNA(Ser). Is also able to aminoacylate tRNA(Sec) with serine, to form the misacylated tRNA L-seryl-tRNA(Sec), which will be further converted into selenocysteinyl-tRNA(Sec). This Leptospira borgpetersenii serovar Hardjo-bovis (strain JB197) protein is Serine--tRNA ligase.